The sequence spans 419 residues: Protein farnesyltransferase subunit beta (419 aa).

5 PFTB repeats span residues 68–109 (EDNT…ITLG), 119–160 (RNKL…SVLN), 167–208 (IKNV…ILIG), 215–256 (LPRL…ALLQ), and 329–371 (SIAL…SLCQ). (2E,6E)-farnesyl diphosphate contacts are provided by residues 193-196 (HGGY) and 235-238 (RTNK). Zn(2+)-binding residues include D241 and C243. Residue 244 to 247 (YSFW) participates in (2E,6E)-farnesyl diphosphate binding. Residue H359 coordinates Zn(2+).

It belongs to the protein prenyltransferase subunit beta family. In terms of assembly, heterodimer of FTA and FTB. It depends on Zn(2+) as a cofactor.

It catalyses the reaction L-cysteinyl-[protein] + (2E,6E)-farnesyl diphosphate = S-(2E,6E)-farnesyl-L-cysteinyl-[protein] + diphosphate. Functionally, catalyzes the transfer of a farnesyl moiety from farnesyl diphosphate to a cysteine at the fourth position from the C-terminus of several proteins. The beta subunit FTB is responsible for peptide-binding. In Pisum sativum (Garden pea), this protein is Protein farnesyltransferase subunit beta (FTB).